Here is a 285-residue protein sequence, read N- to C-terminus: HTH-type transcriptional regulator MurR (285 aa).

Residues 1-77 form the HTH rpiR-type domain; sequence MLYLTKISNA…MALIGEYSAS (77 aa). The segment at residues 37–56 is a DNA-binding region (H-T-H motif); sequence SRQMAKQLGISQSSIVKFAQ. Residues 128-268 form the SIS domain; the sequence is IIEVISKAPF…FVGLVQLNDV (141 aa).

Homotetramer.

It functions in the pathway amino-sugar metabolism; N-acetylmuramate degradation [regulation]. Its function is as follows. Represses the expression of the murPQ operon involved in the uptake and degradation of N-acetylmuramic acid (MurNAc). Binds to two adjacent inverted repeats within the operator region. MurNAc 6-phosphate, the substrate of MurQ, is the specific inducer that weakens binding of MurR to the operator. The sequence is that of HTH-type transcriptional regulator MurR from Escherichia coli (strain K12 / MC4100 / BW2952).